A 306-amino-acid chain; its full sequence is WUSCHEL-related homeobox 13 (306 aa).

Residues 1–11 (MMALGVPPPPS) show a composition bias toward pro residues. Disordered regions lie at residues 1-20 (MMAL…GPLR), 103-142 (PRSH…PRPE), and 190-276 (SRSK…ARAT). Basic and acidic residues predominate over residues 126–142 (GEERVPDPKPRRNPRPE). Positions 132 to 196 (DPKPRRNPRP…NRKSRSKNKL (65 aa)) form a DNA-binding region, homeobox; WUS-type. Positions 199-210 (GGTGRAGLGLGG) are enriched in gly residues. Residues 231-242 (FTPPPILPPQPV) show a composition bias toward pro residues. Residues 243–270 (QPQQQLVSPVAAPTSLSSSSSDRSSGSS) show a composition bias toward low complexity.

The protein belongs to the WUS homeobox family.

The protein resides in the nucleus. Functionally, transcription factor which may be involved in developmental processes. The polypeptide is WUSCHEL-related homeobox 13 (WOX13) (Oryza sativa subsp. japonica (Rice)).